Reading from the N-terminus, the 372-residue chain is MADS-box transcription factor pvg4 (372 aa).

One can recognise an MADS-box domain in the interval 1–61; that stretch reads MGRKKISIAP…GRLHVFCSSD (61 aa). The disordered stretch occupies residues 81–187; that stretch reads SHFSSSPVEE…HPPHPHFHNN (107 aa). Positions 84–100 are enriched in low complexity; the sequence is SSSPVEESSTVSPETTT. Over residues 114–145 the composition is skewed to polar residues; sequence QDQPLSDSQLDTGDSPATSETTVQDYNPQVQS. A compositionally biased stretch (basic residues) spans 167-184; it reads QHHHPHTRPPHHPPHPHF.

It localises to the nucleus. Functionally, acts in transcription regulation. May bind to a MEF2-like typee II promoter sequence. The sequence is that of MADS-box transcription factor pvg4 (pvg4) from Schizosaccharomyces pombe (strain 972 / ATCC 24843) (Fission yeast).